A 528-amino-acid chain; its full sequence is Atypical kinase COQ8B, mitochondrial (528 aa).

The helical transmembrane segment at 93-109 threads the bilayer; sequence LASFGGLAVGLGLGALA. Positions 151–154 match the KxGQ motif motif; that stretch reads KIGQ. In terms of domain architecture, Protein kinase spans 187-419; sequence MMKVLEEELG…DRVLQKSQDL (233 aa). The AAAS motif signature appears at 212 to 215; it reads AAAS. Residues Ser215, Lys233, and 320–323 each bind ATP; that span reads MELA. The active-site Proton acceptor is the Asp363. Positions 368 and 382 each coordinate ATP.

This sequence belongs to the protein kinase superfamily. ADCK protein kinase family. As to quaternary structure, homodimer; homodimerizes via its transmembrane region. Interacts with COQ6 and COQ7. Interacts with the multi-subunit COQ enzyme complex, composed of at least COQ3, COQ4, COQ5, COQ6, COQ7 and COQ9. As to expression, in the kidney, expressed in glomeruli, predominantly in podocyte foot precesses, as well as in proximal tubules and collecting ducts (at protein level).

The protein localises to the mitochondrion membrane. It localises to the cytoplasm. The protein resides in the cytosol. Its subcellular location is the cell membrane. It functions in the pathway cofactor biosynthesis; ubiquinone biosynthesis. Atypical kinase involved in the biosynthesis of coenzyme Q, also named ubiquinone, an essential lipid-soluble electron transporter for aerobic cellular respiration. Its substrate specificity is still unclear: may act as a protein kinase that mediates phosphorylation of COQ3. According to other reports, acts as a small molecule kinase, possibly a lipid kinase that phosphorylates a prenyl lipid in the ubiquinone biosynthesis pathway, as suggested by its ability to bind coenzyme Q lipid intermediates. However, the small molecule kinase activity was not confirmed by another publication. Required for podocyte migration. The polypeptide is Atypical kinase COQ8B, mitochondrial (Rattus norvegicus (Rat)).